Consider the following 513-residue polypeptide: Aspartic proteinase A2 (513 aa).

Positions 1–24 are cleaved as a signal peptide; it reads MGVYSRAVAFSVFVSFLLFFTAYS. A propeptide spans 25–71 (activation peptide); that stretch reads KRNDGTFRVGLKKLKLDPNNRLATRFGSKQEEALRSSLRSYNNNLGG. The 422-residue stretch at 89 to 510 folds into the Peptidase A1 domain; sequence YYGEIAIGTP…DFGNEQVGFA (422 aa). Residue Asp107 is part of the active site. Intrachain disulfides connect Cys120–Cys126 and Cys285–Cys289. The active site involves Asp294. One can recognise a Saposin B-type domain in the interval 319–424; sequence VVSQQCKTVV…NEICERMPSP (106 aa). Intrachain disulfides connect Cys324-Cys418, Cys349-Cys390, Cys355-Cys387, and Cys432-Cys469. A glycan (N-linked (GlcNAc...) asparagine) is linked at Asn404.

Belongs to the peptidase A1 family. Expressed in seed pods and dry seeds.

The protein resides in the vacuole. In terms of biological role, involved in the breakdown of propeptides of storage proteins in protein-storage vacuoles. This Arabidopsis thaliana (Mouse-ear cress) protein is Aspartic proteinase A2 (APA2).